The primary structure comprises 474 residues: tRNA-2-methylthio-N(6)-dimethylallyladenosine synthase (474 aa).

One can recognise an MTTase N-terminal domain in the interval 3-120 (KKLHIKTWGC…LPEMINSVRG (118 aa)). [4Fe-4S] cluster-binding residues include cysteine 12, cysteine 49, cysteine 83, cysteine 157, cysteine 161, and cysteine 164. A Radical SAM core domain is found at 143 to 375 (RAEGPTAFVS…QERINQQAMA (233 aa)). A TRAM domain is found at 378-441 (RRMLGTTQRI…PNSLRGKVVR (64 aa)).

The protein belongs to the methylthiotransferase family. MiaB subfamily. As to quaternary structure, monomer. [4Fe-4S] cluster serves as cofactor.

It localises to the cytoplasm. It carries out the reaction N(6)-dimethylallyladenosine(37) in tRNA + (sulfur carrier)-SH + AH2 + 2 S-adenosyl-L-methionine = 2-methylsulfanyl-N(6)-dimethylallyladenosine(37) in tRNA + (sulfur carrier)-H + 5'-deoxyadenosine + L-methionine + A + S-adenosyl-L-homocysteine + 2 H(+). Functionally, catalyzes the methylthiolation of N6-(dimethylallyl)adenosine (i(6)A), leading to the formation of 2-methylthio-N6-(dimethylallyl)adenosine (ms(2)i(6)A) at position 37 in tRNAs that read codons beginning with uridine. The sequence is that of tRNA-2-methylthio-N(6)-dimethylallyladenosine synthase from Escherichia coli (strain UTI89 / UPEC).